Consider the following 232-residue polypeptide: Ribonuclease P protein component 3 (232 aa).

The protein belongs to the eukaryotic/archaeal RNase P protein component 3 family. In terms of assembly, consists of a catalytic RNA component and at least 4-5 protein subunits. Forms a subcomplex with Rnp2 which stimulates the catalytic RNA.

The protein localises to the cytoplasm. The catalysed reaction is Endonucleolytic cleavage of RNA, removing 5'-extranucleotides from tRNA precursor.. In terms of biological role, part of ribonuclease P, a protein complex that generates mature tRNA molecules by cleaving their 5'-ends. The chain is Ribonuclease P protein component 3 from Methanocaldococcus jannaschii (strain ATCC 43067 / DSM 2661 / JAL-1 / JCM 10045 / NBRC 100440) (Methanococcus jannaschii).